The primary structure comprises 272 residues: Dihydropteroate synthase (272 aa).

Residues 1-256 (MIKTKIMGIL…NVLLNTRLAQ (256 aa)) form the Pterin-binding domain. N11 contacts Mg(2+). (7,8-dihydropterin-6-yl)methyl diphosphate is bound by residues T51, D89, N108, D172, K208, and 244 to 246 (RVH).

This sequence belongs to the DHPS family. In terms of assembly, homodimer. Requires Mg(2+) as cofactor.

The catalysed reaction is (7,8-dihydropterin-6-yl)methyl diphosphate + 4-aminobenzoate = 7,8-dihydropteroate + diphosphate. Its pathway is cofactor biosynthesis; tetrahydrofolate biosynthesis; 7,8-dihydrofolate from 2-amino-4-hydroxy-6-hydroxymethyl-7,8-dihydropteridine diphosphate and 4-aminobenzoate: step 1/2. In terms of biological role, catalyzes the condensation of para-aminobenzoate (pABA) with 6-hydroxymethyl-7,8-dihydropterin diphosphate (DHPt-PP) to form 7,8-dihydropteroate (H2Pte), the immediate precursor of folate derivatives. The sequence is that of Dihydropteroate synthase (folP) from Staphylococcus epidermidis (strain ATCC 12228 / FDA PCI 1200).